The chain runs to 282 residues: UPF0761 membrane protein HAPS_1376 (282 aa).

Transmembrane regions (helical) follow at residues 32–52 (LLSL…LPIF), 89–109 (MGII…SSID), 124–144 (VILS…FAGA), 170–190 (LLKF…YLIV), 202–222 (VGAL…IWYI), and 234–254 (ALAT…VVLL).

This sequence belongs to the UPF0761 family.

The protein resides in the cell inner membrane. The sequence is that of UPF0761 membrane protein HAPS_1376 from Glaesserella parasuis serovar 5 (strain SH0165) (Haemophilus parasuis).